The sequence spans 442 residues: Alpha-1,6-mannosyl-glycoprotein 2-beta-N-acetylglucosaminyltransferase (442 aa).

The Cytoplasmic portion of the chain corresponds to 1 to 9 (MRFRIYKRK). Residues 10–29 (VLILTLVVAACGFVLWSSNG) traverse the membrane as a helical; Signal-anchor for type II membrane protein segment. Over 30-442 (RQRKSDALGP…ELCKSYRRLQ (413 aa)) the chain is Lumenal. Residues Asn64 and Asn81 are each glycosylated (N-linked (GlcNAc...) asparagine). Substrate contacts are provided by residues 118 to 122 (QVHNR) and Asp149. Cys191 and Cys205 are disulfide-bonded. Residue 224 to 228 (QTKHH) participates in substrate binding. Mn(2+) is bound at residue Asp256. Residues Cys278 and Cys281 are joined by a disulfide bond. Position 293 (Arg293) interacts with substrate. Cystine bridges form between Cys329–Cys352, Cys334–Cys435, and Cys373–Cys381. Residue His369 participates in Mn(2+) binding.

The protein belongs to the glycosyltransferase 16 (GT16) protein family. Homodimer. Requires Mn(2+) as cofactor. As to expression, detected in liver, lung, testis, kidney, brain, spleen, thymus, uterus and intestine.

It localises to the golgi apparatus membrane. It carries out the reaction an N(4)-{beta-D-GlcNAc-(1-&gt;2)-alpha-D-Man-(1-&gt;3)-[alpha-D-Man-(1-&gt;6)]-beta-D-Man-(1-&gt;4)-beta-D-GlcNAc-(1-&gt;4)-beta-D-GlcNAc}-L-asparaginyl-[protein] + UDP-N-acetyl-alpha-D-glucosamine = N(4)-{beta-D-GlcNAc-(1-&gt;2)-alpha-D-Man-(1-&gt;3)-[beta-D-GlcNAc-(1-&gt;2)-alpha-D-Man-(1-&gt;6)]-beta-D-Man-(1-&gt;4)-beta-D-GlcNAc-(1-&gt;4)-beta-D-GlcNAc}-L-asparaginyl-[protein] + UDP + H(+). It participates in protein modification; protein glycosylation. Its function is as follows. Plays an essential role in protein N-glycosylation. Catalyzes the transfer of N-acetylglucosamine (GlcNAc) onto the free terminal mannose moiety in the core structure of the nascent N-linked glycan chain, giving rise to the second branch in complex glycans. The polypeptide is Alpha-1,6-mannosyl-glycoprotein 2-beta-N-acetylglucosaminyltransferase (Mgat2) (Mus musculus (Mouse)).